The chain runs to 429 residues: D-amino acid dehydrogenase (429 aa).

3 to 17 (VLILGSGVIGVTSAW) is an FAD binding site.

Belongs to the DadA oxidoreductase family. FAD is required as a cofactor.

The enzyme catalyses a D-alpha-amino acid + A + H2O = a 2-oxocarboxylate + AH2 + NH4(+). It functions in the pathway amino-acid degradation; D-alanine degradation; NH(3) and pyruvate from D-alanine: step 1/1. In terms of biological role, oxidative deamination of D-amino acids. In Xanthomonas euvesicatoria pv. vesicatoria (strain 85-10) (Xanthomonas campestris pv. vesicatoria), this protein is D-amino acid dehydrogenase.